A 148-amino-acid polypeptide reads, in one-letter code: Small ribosomal subunit protein uS13 (148 aa).

The segment at 128-148 is disordered; that stretch reads RGQRTKSTGRRGSTIGVRKKK.

It belongs to the universal ribosomal protein uS13 family. In terms of assembly, part of the 30S ribosomal subunit. Forms a loose heterodimer with protein S19. Forms two bridges to the 50S subunit in the 70S ribosome.

Its function is as follows. Located at the top of the head of the 30S subunit, it contacts several helices of the 16S rRNA. In the 70S ribosome it contacts the 23S rRNA (bridge B1a) and protein L5 of the 50S subunit (bridge B1b), connecting the 2 subunits; these bridges are implicated in subunit movement. The protein is Small ribosomal subunit protein uS13 of Methanococcoides burtonii (strain DSM 6242 / NBRC 107633 / OCM 468 / ACE-M).